Here is a 298-residue protein sequence, read N- to C-terminus: tRNA-cytidine(32) 2-sulfurtransferase (298 aa).

A disordered region spans residues 1–26 (MTAVISLPDPPQRASRGPRVAGPGQD). A PP-loop motif motif is present at residues 57–62 (SGGKDS). Cys132, Cys135, and Cys223 together coordinate [4Fe-4S] cluster.

The protein belongs to the TtcA family. In terms of assembly, homodimer. Mg(2+) serves as cofactor. The cofactor is [4Fe-4S] cluster.

The protein localises to the cytoplasm. The catalysed reaction is cytidine(32) in tRNA + S-sulfanyl-L-cysteinyl-[cysteine desulfurase] + AH2 + ATP = 2-thiocytidine(32) in tRNA + L-cysteinyl-[cysteine desulfurase] + A + AMP + diphosphate + H(+). The protein operates within tRNA modification. Catalyzes the ATP-dependent 2-thiolation of cytidine in position 32 of tRNA, to form 2-thiocytidine (s(2)C32). The sulfur atoms are provided by the cysteine/cysteine desulfurase (IscS) system. The protein is tRNA-cytidine(32) 2-sulfurtransferase of Stenotrophomonas maltophilia (strain R551-3).